Reading from the N-terminus, the 89-residue chain is Large ribosomal subunit protein eL34 (89 aa).

The disordered stretch occupies residues 1-22 (MPAPRYKSGSSKKVYRKAPGNS).

The protein belongs to the eukaryotic ribosomal protein eL34 family.

The sequence is that of Large ribosomal subunit protein eL34 from Methanococcus maripaludis (strain C7 / ATCC BAA-1331).